The sequence spans 353 residues: S-adenosylmethionine decarboxylase proenzyme (353 aa).

Residues Glu9 and Glu12 contribute to the active site. The active-site Schiff-base intermediate with substrate; via pyruvic acid is the Ser69. A Pyruvic acid (Ser); by autocatalysis modification is found at Ser69. Cys83 functions as the Proton donor; for catalytic activity in the catalytic mechanism. Catalysis depends on proton acceptor; for processing activity residues Ser232 and His245.

This sequence belongs to the eukaryotic AdoMetDC family. It depends on pyruvate as a cofactor. Post-translationally, is synthesized initially as an inactive proenzyme. Formation of the active enzyme involves a self-maturation process in which the active site pyruvoyl group is generated from an internal serine residue via an autocatalytic post-translational modification. Two non-identical subunits are generated from the proenzyme in this reaction, and the pyruvate is formed at the N-terminus of the alpha chain, which is derived from the carboxyl end of the proenzyme. The post-translation cleavage follows an unusual pathway, termed non-hydrolytic serinolysis, in which the side chain hydroxyl group of the serine supplies its oxygen atom to form the C-terminus of the beta chain, while the remainder of the serine residue undergoes an oxidative deamination to produce ammonia and the pyruvoyl group blocking the N-terminus of the alpha chain.

It catalyses the reaction S-adenosyl-L-methionine + H(+) = S-adenosyl 3-(methylsulfanyl)propylamine + CO2. The protein operates within amine and polyamine biosynthesis; S-adenosylmethioninamine biosynthesis; S-adenosylmethioninamine from S-adenosyl-L-methionine: step 1/1. The polypeptide is S-adenosylmethionine decarboxylase proenzyme (SAMDC) (Vicia faba (Broad bean)).